A 120-amino-acid polypeptide reads, in one-letter code: Large ribosomal subunit protein bL20 (120 aa).

This sequence belongs to the bacterial ribosomal protein bL20 family.

Its function is as follows. Binds directly to 23S ribosomal RNA and is necessary for the in vitro assembly process of the 50S ribosomal subunit. It is not involved in the protein synthesizing functions of that subunit. The polypeptide is Large ribosomal subunit protein bL20 (Blochmanniella pennsylvanica (strain BPEN)).